The primary structure comprises 959 residues: Lon protease homolog, mitochondrial (959 aa).

The N-terminal 67 residues, 1–67 (MAASTGYVRL…GPAIGGQWRG (67 aa)), are a transit peptide targeting the mitochondrion. Disordered regions lie at residues 77-102 (GAFS…GSAG) and 218-257 (RQLE…HPAE). Positions 91-102 (EEGAGGAGGSAG) are enriched in gly residues. The Lon N-terminal domain maps to 124–370 (LPLIAITRNP…KALSLLKKEF (247 aa)). Residues 233 to 243 (HKPRRKSKRGK) show a composition bias toward basic residues. Basic and acidic residues predominate over residues 244–256 (KEAEDELSARHPA). 523-530 (GPPGVGKT) contacts ATP. The region spanning 759–949 (VTPPGVVMGL…REIFDIAFPD (191 aa)) is the Lon proteolytic domain. Catalysis depends on residues S855 and K898.

It belongs to the peptidase S16 family. Homohexamer. Organized in a ring with a central cavity. The ATP-binding and proteolytic domains (AP-domain) form a hexameric chamber, while the N-terminal domain is arranged as a trimer of dimers. DNA and RNA binding is stimulated by substrate and inhibited by ATP binding. Interacts with TWNK and mitochondrial DNA polymerase subunit POLG. In terms of tissue distribution, duodenum, heart, lung and liver, but not thymus.

It is found in the mitochondrion matrix. It carries out the reaction Hydrolysis of proteins in presence of ATP.. Its activity is regulated as follows. Peptidase activity is subject to substrate inhibition by ATP. ATP-dependent serine protease that mediates the selective degradation of misfolded, unassembled or oxidatively damaged polypeptides as well as certain short-lived regulatory proteins in the mitochondrial matrix. Endogenous substrates include mitochondrial steroidogenic acute regulatory (StAR) protein, DELE1, helicase Twinkle (TWNK) and the large ribosomal subunit protein MRPL32/bL32m. MRPL32/bL32m is protected from degradation by LONP1 when it is bound to a nucleic acid (RNA), but TWNK is not. May also have a chaperone function in the assembly of inner membrane protein complexes. Participates in the regulation of mitochondrial gene expression and in the maintenance of the integrity of the mitochondrial genome. Binds to mitochondrial promoters and RNA in a single-stranded, site-specific, and strand-specific manner. May regulate mitochondrial DNA replication and/or gene expression using site-specific, single-stranded DNA binding to target the degradation of regulatory proteins binding to adjacent sites in mitochondrial promoters. In Homo sapiens (Human), this protein is Lon protease homolog, mitochondrial.